The primary structure comprises 194 residues: Small ribosomal subunit protein uS4c (194 aa).

Residues M82–N143 form the S4 RNA-binding domain.

The protein belongs to the universal ribosomal protein uS4 family. In terms of assembly, part of the 30S ribosomal subunit. Contacts protein S5. The interaction surface between S4 and S5 is involved in control of translational fidelity.

It localises to the plastid. It is found in the chloroplast. Its function is as follows. One of the primary rRNA binding proteins, it binds directly to 16S rRNA where it nucleates assembly of the body of the 30S subunit. With S5 and S12 plays an important role in translational accuracy. The sequence is that of Small ribosomal subunit protein uS4c (rps4) from Sisyrinchium striatum (Satin flower).